The primary structure comprises 447 residues: MSLWLEAPVPDVSPDSAVELWEPDAQDASSQPLGSSKCILREESSTPQSAGDTSRMGLEAPEPTALLPGVEAPPESTELRPQKRKKGPAPKMLGNELCSVCGDKASGFHYNVLSCEGCKGFFRRSVIKGARYVCHSGGHCPMDTYMRRKCQECRLRKCRQAGMREECVLSEEQIRLKKMKRQEEEQAQATSAPPRASSPPQVLPQLSPEQLGMIEKLVAAQQLCNRRSFSDQLRVTPWPMAPDPQSREARQQRFAHFTELAIVSVQEIVDFAKQLPGFLQLSREDQIALLKTSAIEVMLLETSRRYNPGSESITFLKDFSYNREDFAKAGLQVEFINPIFEFSRAMNELQLNDAEFALLIAISIFSADRPNVQDQLQVERLQHTYVEALHAYVSIHHPHDRLMFPRMLMKLVSLRTLSSVHSEQVFALRLQDKKLPPLLSEIWDVHE.

The interval 1 to 88 is disordered; that stretch reads MSLWLEAPVP…LRPQKRKKGP (88 aa). A transactivation AF-1; required for ligand-independent transactivation function region spans residues 1-96; that stretch reads MSLWLEAPVP…GPAPKMLGNE (96 aa). The nuclear receptor DNA-binding region spans 95–170; it reads NELCSVCGDK…AGMREECVLS (76 aa). NR C4-type zinc fingers lie at residues 98-118 and 134-158; these read CSVC…CEGC and CHSG…LRKC. The tract at residues 178–203 is disordered; sequence KMKRQEEEQAQATSAPPRASSPPQVL. Positions 187–203 are enriched in low complexity; that stretch reads AQATSAPPRASSPPQVL. The segment at 205–447 is transactivation AF-2; required for ligand-dependent transactivation function; mediates interaction with CCAR2; that stretch reads QLSPEQLGMI…LLSEIWDVHE (243 aa). The region spanning 209–447 is the NR LBD domain; that stretch reads EQLGMIEKLV…LLSEIWDVHE (239 aa).

Belongs to the nuclear hormone receptor family. NR1 subfamily. In terms of assembly, heterodimer of NR1H3 and RXR (retinoic acid receptor). Interacts with CCAR2 (via N-terminus) in a ligand-independent manner. Interacts with SIRT1 and this interaction is inhibited by CCAR2. Post-translationally, ubiquitinated by UBR5, leading to its degradation: UBR5 specifically recognizes and binds ligand-bound NR1H3 when it is not associated with coactivators (NCOAs). In presence of NCOAs, the UBR5-degron is not accessible, preventing its ubiquitination and degradation.

The protein localises to the nucleus. It is found in the cytoplasm. Its function is as follows. Nuclear receptor that exhibits a ligand-dependent transcriptional activation activity. Interaction with retinoic acid receptor (RXR) shifts RXR from its role as a silent DNA-binding partner to an active ligand-binding subunit in mediating retinoid responses through target genes defined by LXRES. LXRES are DR4-type response elements characterized by direct repeats of two similar hexanuclotide half-sites spaced by four nucleotides. Plays an important role in the regulation of cholesterol homeostasis, regulating cholesterol uptake through MYLIP-dependent ubiquitination of LDLR, VLDLR and LRP8. Interplays functionally with RORA for the regulation of genes involved in liver metabolism. Induces LPCAT3-dependent phospholipid remodeling in endoplasmic reticulum (ER) membranes of hepatocytes, driving SREBF1 processing and lipogenesis. Via LPCAT3, triggers the incorporation of arachidonate into phosphatidylcholines of ER membranes, increasing membrane dynamics and enabling triacylglycerols transfer to nascent very low-density lipoprotein (VLDL) particles. Via LPCAT3 also counteracts lipid-induced ER stress response and inflammation, likely by modulating SRC kinase membrane compartmentalization and limiting the synthesis of lipid inflammatory mediators. The chain is Oxysterols receptor LXR-alpha (NR1H3) from Bos taurus (Bovine).